We begin with the raw amino-acid sequence, 122 residues long: Protein preY, mitochondrial (122 aa).

Residues 1–40 (MLAVRAWGRTYNTLVQRKLNAACPTGALPAVTLRPLHCSL) constitute a mitochondrion transit peptide. In terms of domain architecture, TRM112 spans 56–102 (DPTLLQFLVCPLSRKSLRYEESTNELINDELGIAYPIVDGIPNMIPQ).

The protein belongs to the PREY family.

The protein resides in the mitochondrion. In mitochondria, S-adenosylmethionine-dependent methyltransferase chaperone that supports both coenzyme Q biosynthesis and NADH:ubiquinone oxidoreductase complex (complex I, MT-ND1) assembly. This is Protein preY, mitochondrial (pyurf) from Xenopus tropicalis (Western clawed frog).